The chain runs to 611 residues: Zinc metalloproteinase nas-31 (611 aa).

The first 17 residues, 1-17 (MILQLLFYSLFTHLAVS), serve as a signal peptide directing secretion. The propeptide occupies 18–158 (QIDVNQALNQ…TVSTASRARR (141 aa)). Asparagine 53 and asparagine 67 each carry an N-linked (GlcNAc...) asparagine glycan. Residues 82–95 (NAGTNQENGATEQQ) show a composition bias toward polar residues. Positions 82 to 103 (NAGTNQENGATEQQKPLREKPR) are disordered. Residues 159–354 (QAYRDRYYPS…SMMNEHYKCK (196 aa)) form the Peptidase M12A domain. An N-linked (GlcNAc...) asparagine glycan is attached at asparagine 200. 9 disulfide bridges follow: cysteine 203–cysteine 353, cysteine 224–cysteine 243, cysteine 357–cysteine 376, cysteine 379–cysteine 390, cysteine 397–cysteine 428, cysteine 455–cysteine 476, cysteine 532–cysteine 564, cysteine 539–cysteine 557, and cysteine 548–cysteine 561. Histidine 251 contributes to the Zn(2+) binding site. Residue glutamate 252 is part of the active site. Residues histidine 255 and histidine 261 each coordinate Zn(2+). Residues 340–396 (GFYDISMMNEHYKCKELCPAASSAQCKNGGFPSPRNCAICICPSGYGGILCDQRPPG) form the EGF-like domain. In terms of domain architecture, CUB spans 397–516 (CGDSVTATTT…LEYRAVTPSV (120 aa)). The N-linked (GlcNAc...) asparagine glycan is linked to asparagine 424. The ShKT domain maps to 532-564 (CQDLHPNCDFYKFFGMCRSKKIRSNCKFTCHDC).

Zn(2+) is required as a cofactor. Expressed in excretory cell and in amphid and phasmid sheath glia.

Its subcellular location is the secreted. Its function is as follows. Metalloprotease. This is Zinc metalloproteinase nas-31 (nas-31) from Caenorhabditis elegans.